The chain runs to 432 residues: Ribosomal protein uS12 methylthiotransferase RimO (432 aa).

An MTTase N-terminal domain is found at 1–112 (MKIGVVSLGC…ILNYLGLKEK (112 aa)). [4Fe-4S] cluster is bound by residues cysteine 10, cysteine 46, cysteine 75, cysteine 134, cysteine 138, and cysteine 141. A Radical SAM core domain is found at 120-350 (STPRSYAYLK…MAIQRGITRK (231 aa)). Residues 353 to 422 (EEFLGKEIEV…DYDLAGRDTE (70 aa)) form the TRAM domain.

Belongs to the methylthiotransferase family. RimO subfamily. The cofactor is [4Fe-4S] cluster.

The protein localises to the cytoplasm. The enzyme catalyses L-aspartate(89)-[ribosomal protein uS12]-hydrogen + (sulfur carrier)-SH + AH2 + 2 S-adenosyl-L-methionine = 3-methylsulfanyl-L-aspartate(89)-[ribosomal protein uS12]-hydrogen + (sulfur carrier)-H + 5'-deoxyadenosine + L-methionine + A + S-adenosyl-L-homocysteine + 2 H(+). Its function is as follows. Catalyzes the methylthiolation of an aspartic acid residue of ribosomal protein uS12. In Aquifex aeolicus (strain VF5), this protein is Ribosomal protein uS12 methylthiotransferase RimO.